The sequence spans 683 residues: Bifunctional lysine-specific demethylase and histidyl-hydroxylase NO66 (683 aa).

Residues 1 to 26 (MHKASTSSANRANFQGNHKTQKSPNN) show a composition bias toward polar residues. Disordered stretches follow at residues 1-162 (MHKA…SPIQ) and 179-208 (AAGA…AAKS). Residues 54–65 (LTKEQKERRKMM) are compositionally biased toward basic and acidic residues. Polar residues predominate over residues 85-94 (IDTSASTSNK). Basic residues predominate over residues 95–108 (GKSKAARPTDRKRR). Residues 116 to 125 (PADANNNNTK) show a composition bias toward low complexity. Position 152 is a phosphoserine (Ser152). Thr158 is modified (phosphothreonine). Ser159 is modified (phosphoserine). The span at 179-189 (AAGASGASGPA) shows a compositional bias: low complexity. A JmjC domain is found at 341–480 (NPSTYLVGLR…NLLEKLMPIV (140 aa)). Fe cation contacts are provided by His381, Asp383, and His446.

This sequence belongs to the ROX family. NO66 subfamily. Fe(2+) is required as a cofactor.

It is found in the nucleus. It catalyses the reaction N(6),N(6)-dimethyl-L-lysyl(36)-[histone H3] + 2 2-oxoglutarate + 2 O2 = L-lysyl(36)-[histone H3] + 2 formaldehyde + 2 succinate + 2 CO2. Functionally, oxygenase that can act as both a histone lysine demethylase and a ribosomal histidine hydroxylase. Specifically demethylates 'Lys-4' (H3K4me) and 'Lys-36' (H3K36me) of histone H3, thereby playing a central role in histone code. The sequence is that of Bifunctional lysine-specific demethylase and histidyl-hydroxylase NO66 from Drosophila yakuba (Fruit fly).